We begin with the raw amino-acid sequence, 1560 residues long: Lysine-specific demethylase 5C (1560 aa).

The 42-residue stretch at C14–P55 folds into the JmjN domain. In terms of domain architecture, ARID spans T79–S169. Positions L197–N207 are enriched in polar residues. The tract at residues L197–I227 is disordered. Residues K205, K229, K244, and K274 each participate in a glycyl lysine isopeptide (Lys-Gly) (interchain with G-Cter in SUMO2) cross-link. At S287 the chain carries Phosphoserine. A Glycyl lysine isopeptide (Lys-Gly) (interchain with G-Cter in SUMO2) cross-link involves residue K295. Phosphoserine occurs at positions 301 and 317. The PHD-type 1 zinc-finger motif lies at V326–V372. Y440 contributes to the 2-oxoglutarate binding site. The JmjC domain occupies E468–R634. Fe cation is bound by residues H514 and E516. 2-oxoglutarate contacts are provided by S522, N524, and K532. H602 is a Fe cation binding site. The C5HC2 zinc finger occupies C707–M759. Phosphoserine occurs at positions 893 and 897. A Glycyl lysine isopeptide (Lys-Gly) (interchain with G-Cter in SUMO2) cross-link involves residue K1127. The interval I1161–A1181 is disordered. Over residues S1169–A1181 the composition is skewed to low complexity. The PHD-type 2 zinc finger occupies I1187–M1248. Disordered stretches follow at residues Q1316–K1371 and E1444–L1560. The segment covering P1335–P1345 has biased composition (basic and acidic residues). Position 1359 is a phosphoserine (S1359). Residues S1448–V1463 are compositionally biased toward basic residues. Basic and acidic residues predominate over residues D1464–R1481. The segment covering E1488–G1503 has biased composition (acidic residues). Positions S1516–T1544 are enriched in polar residues.

It belongs to the JARID1 histone demethylase family. In terms of assembly, part of two distinct complexes, one containing E2F6, and the other containing REST. Interacts with ZMYND8. The cofactor is Fe(2+). In terms of tissue distribution, expressed in all tissues examined. Highest levels found in brain and skeletal muscle.

The protein localises to the nucleus. The catalysed reaction is N(6),N(6),N(6)-trimethyl-L-lysyl(4)-[histone H3] + 3 2-oxoglutarate + 3 O2 = L-lysyl(4)-[histone H3] + 3 formaldehyde + 3 succinate + 3 CO2. With respect to regulation, the inhibitor KDOAM-25 and others inhibit its demethylase activity, resulting to cell cycle arrest in myeloma cells. Functionally, histone demethylase that specifically demethylates 'Lys-4' of histone H3, thereby playing a central role in histone code. Does not demethylate histone H3 'Lys-9', H3 'Lys-27', H3 'Lys-36', H3 'Lys-79' or H4 'Lys-20'. Demethylates trimethylated and dimethylated but not monomethylated H3 'Lys-4'. Participates in transcriptional repression of neuronal genes by recruiting histone deacetylases and REST at neuron-restrictive silencer elements. Represses the CLOCK-BMAL1 heterodimer-mediated transcriptional activation of the core clock component PER2. The chain is Lysine-specific demethylase 5C from Homo sapiens (Human).